The primary structure comprises 719 residues: Ribosomal RNA large subunit methyltransferase K/L (719 aa).

A THUMP domain is found at 43–154; that stretch reads IGYKACLWSR…KGKANITLDL (112 aa).

This sequence belongs to the methyltransferase superfamily. RlmKL family.

It is found in the cytoplasm. The catalysed reaction is guanosine(2445) in 23S rRNA + S-adenosyl-L-methionine = N(2)-methylguanosine(2445) in 23S rRNA + S-adenosyl-L-homocysteine + H(+). The enzyme catalyses guanosine(2069) in 23S rRNA + S-adenosyl-L-methionine = N(2)-methylguanosine(2069) in 23S rRNA + S-adenosyl-L-homocysteine + H(+). Specifically methylates the guanine in position 2445 (m2G2445) and the guanine in position 2069 (m7G2069) of 23S rRNA. The protein is Ribosomal RNA large subunit methyltransferase K/L of Aeromonas salmonicida (strain A449).